The sequence spans 251 residues: Small ribosomal subunit protein uS2 (251 aa).

It belongs to the universal ribosomal protein uS2 family.

This is Small ribosomal subunit protein uS2 from Chlorobium chlorochromatii (strain CaD3).